The following is a 1396-amino-acid chain: Sterol 3-beta-glucosyltransferase (1396 aa).

Positions 1–16 (MRPFIDDAKRRAERRL) are enriched in basic and acidic residues. Disordered regions lie at residues 1-21 (MRPFIDDAKRRAERRLSASRQ), 40-64 (DADDAQMDYTAPPSSNDSRDGMQYM), 83-196 (ARFD…RAAP), and 209-232 (ETENPEENPQTLEEKEQGVSKKSQ). A compositionally biased stretch (basic and acidic residues) spans 94–107 (ETRTRPRFLSEKPF). Low complexity predominate over residues 186 to 196 (RPRSATPRAAP). The GRAM 1 domain maps to 238-273 (RQLMEMFRFPTPEKVVVEYACSLLQSMLLQGYMYVT). A PH domain is found at 289–388 (RVIKSGYIYK…WVRALQKVIF (100 aa)). Disordered stretches follow at residues 460–532 (GTPT…SSSS) and 571–627 (TIHT…ESKD). Polar residues-rich tracts occupy residues 484–532 (GSQN…SSSS) and 571–584 (TIHTWQQRTSGTAR). Residues 588–602 (RHSDEITRSTTEHGL) are compositionally biased toward basic and acidic residues. The GRAM 2 domain occupies 717–783 (ERFRAHFALP…HDIENVEKEK (67 aa)). Positions 905, 906, 908, 1208, 1210, 1223, 1227, 1228, 1247, and 1248 each coordinate UDP-alpha-D-glucose. Low complexity predominate over residues 1324–1343 (SSISSTPFSPTPSTKTSDDQ). The interval 1324-1346 (SSISSTPFSPTPSTKTSDDQNAN) is disordered.

The protein belongs to the glycosyltransferase 28 family.

It localises to the cytoplasm. It is found in the preautophagosomal structure membrane. The catalysed reaction is a sterol + UDP-alpha-D-glucose = a sterol 3-beta-D-glucoside + UDP + H(+). It catalyses the reaction ergosterol + UDP-alpha-D-glucose = ergosteryl 3-beta-D-glucoside + UDP + H(+). Its function is as follows. Sterol glycosyltransferase responsible for the glycosylation of ergosterol to form ergosterol-glucoside. This Emericella nidulans (strain FGSC A4 / ATCC 38163 / CBS 112.46 / NRRL 194 / M139) (Aspergillus nidulans) protein is Sterol 3-beta-glucosyltransferase.